The chain runs to 270 residues: NAD kinase (270 aa).

Residue aspartate 57 is the Proton acceptor of the active site. NAD(+) contacts are provided by residues aspartate 57 to glycine 58, asparagine 125 to glutamate 126, arginine 150, and asparagine 227.

It belongs to the NAD kinase family. The cofactor is a divalent metal cation.

The protein resides in the cytoplasm. It carries out the reaction NAD(+) + ATP = ADP + NADP(+) + H(+). Its function is as follows. Involved in the regulation of the intracellular balance of NAD and NADP, and is a key enzyme in the biosynthesis of NADP. Catalyzes specifically the phosphorylation on 2'-hydroxyl of the adenosine moiety of NAD to yield NADP. In Ureaplasma parvum serovar 3 (strain ATCC 700970), this protein is NAD kinase.